A 391-amino-acid polypeptide reads, in one-letter code: Small ribosomal subunit protein bS1 (391 aa).

4 consecutive S1 motif domains span residues 16–90 (GDKV…LSRR), 108–173 (NEII…LSRK), 194–262 (GDVI…LSIK), and 279–348 (NDDI…LSIK). Residues 356–381 (VVESDPSTTKAYLESEEEDNPTIGDM) form a disordered region.

The protein belongs to the bacterial ribosomal protein bS1 family.

Binds mRNA; thus facilitating recognition of the initiation point. It is needed to translate mRNA with a short Shine-Dalgarno (SD) purine-rich sequence. The polypeptide is Small ribosomal subunit protein bS1 (rpsA) (Staphylococcus aureus (strain MRSA252)).